Reading from the N-terminus, the 297-residue chain is MPFKDQLFLASQYLAPHHLVSRLMGRAADCRAPEIKNRMIARFVRRYNVDMSEALVEDPLAYASFNDFFTRALKPDARPLDDEPGAALCPADGAISQIGAIDNGRIFQAKGHSFGLTDLLGGDAERAAPFAGGQFATIYLSPRDYHRVHMPLAGTLREMVHVPGRLFSVNPLTARSVPELFARNERVACLFDTEHGPMALVLVGAMIVASIETVWAGLVTPHKRQVRSVRYDAAARAPIHLDKGAEMGRFKLGSTVIVLFGPKRLRWLDLPSVRGPVRMGETLALPASTAISFPESE.

Active-site charge relay system; for autoendoproteolytic cleavage activity residues include Asp-92, His-149, and Ser-254. Ser-254 functions as the Schiff-base intermediate with substrate; via pyruvic acid; for decarboxylase activity in the catalytic mechanism. Ser-254 carries the pyruvic acid (Ser); by autocatalysis modification.

It belongs to the phosphatidylserine decarboxylase family. PSD-B subfamily. Prokaryotic type I sub-subfamily. Heterodimer of a large membrane-associated beta subunit and a small pyruvoyl-containing alpha subunit. The cofactor is pyruvate. In terms of processing, is synthesized initially as an inactive proenzyme. Formation of the active enzyme involves a self-maturation process in which the active site pyruvoyl group is generated from an internal serine residue via an autocatalytic post-translational modification. Two non-identical subunits are generated from the proenzyme in this reaction, and the pyruvate is formed at the N-terminus of the alpha chain, which is derived from the carboxyl end of the proenzyme. The autoendoproteolytic cleavage occurs by a canonical serine protease mechanism, in which the side chain hydroxyl group of the serine supplies its oxygen atom to form the C-terminus of the beta chain, while the remainder of the serine residue undergoes an oxidative deamination to produce ammonia and the pyruvoyl prosthetic group on the alpha chain. During this reaction, the Ser that is part of the protease active site of the proenzyme becomes the pyruvoyl prosthetic group, which constitutes an essential element of the active site of the mature decarboxylase.

It is found in the cell membrane. The enzyme catalyses a 1,2-diacyl-sn-glycero-3-phospho-L-serine + H(+) = a 1,2-diacyl-sn-glycero-3-phosphoethanolamine + CO2. The protein operates within phospholipid metabolism; phosphatidylethanolamine biosynthesis; phosphatidylethanolamine from CDP-diacylglycerol: step 2/2. Its function is as follows. Catalyzes the formation of phosphatidylethanolamine (PtdEtn) from phosphatidylserine (PtdSer). This chain is Phosphatidylserine decarboxylase proenzyme, found in Bordetella bronchiseptica (strain ATCC BAA-588 / NCTC 13252 / RB50) (Alcaligenes bronchisepticus).